The following is a 506-amino-acid chain: Ribose import ATP-binding protein RbsA 1 (506 aa).

ABC transporter domains are found at residues 5–241 (LALT…VGRR) and 254–498 (RDAA…TSDA). 37–44 (GENGAGKS) lines the ATP pocket.

This sequence belongs to the ABC transporter superfamily. Ribose importer (TC 3.A.1.2.1) family. In terms of assembly, the complex is composed of an ATP-binding protein (RbsA), two transmembrane proteins (RbsC) and a solute-binding protein (RbsB).

It is found in the cell inner membrane. It catalyses the reaction D-ribose(out) + ATP + H2O = D-ribose(in) + ADP + phosphate + H(+). Functionally, part of the ABC transporter complex RbsABC involved in ribose import. Responsible for energy coupling to the transport system. In Burkholderia thailandensis (strain ATCC 700388 / DSM 13276 / CCUG 48851 / CIP 106301 / E264), this protein is Ribose import ATP-binding protein RbsA 1.